A 41-amino-acid chain; its full sequence is Probable cinnamyl alcohol dehydrogenase 2 (41 aa).

This sequence belongs to the zinc-containing alcohol dehydrogenase family. The cofactor is Zn(2+).

It carries out the reaction (E)-cinnamyl alcohol + NADP(+) = (E)-cinnamaldehyde + NADPH + H(+). It catalyses the reaction (E)-coniferol + NADP(+) = (E)-coniferaldehyde + NADPH + H(+). The enzyme catalyses (E)-sinapyl alcohol + NADP(+) = (E)-sinapaldehyde + NADPH + H(+). The catalysed reaction is (E)-4-coumaroyl alcohol + NADP(+) = (E)-4-coumaraldehyde + NADPH + H(+). It carries out the reaction (E)-caffeyl alcohol + NADP(+) = (E)-caffeyl aldehyde + NADPH + H(+). It functions in the pathway aromatic compound metabolism; phenylpropanoid biosynthesis. In terms of biological role, involved in lignin biosynthesis. Catalyzes the final step specific for the production of lignin monomers, like coniferyl alcohol, sinapyl alcohol and 4-coumaryl alcohol. The polypeptide is Probable cinnamyl alcohol dehydrogenase 2 (Pseudotsuga menziesii (Douglas-fir)).